The sequence spans 116 residues: Large ribosomal subunit protein bL19 (116 aa).

Belongs to the bacterial ribosomal protein bL19 family.

In terms of biological role, this protein is located at the 30S-50S ribosomal subunit interface and may play a role in the structure and function of the aminoacyl-tRNA binding site. This Staphylococcus haemolyticus (strain JCSC1435) protein is Large ribosomal subunit protein bL19.